The chain runs to 479 residues: MFS-type transporter lnaF (479 aa).

The next 11 helical transmembrane spans lie at 47-67, 71-91, 104-124, 136-156, 177-197, 208-228, 250-270, 283-303, 306-326, 344-364, and 372-392; these read WIYL…GFTP, GLII…SGAI, LLCI…GPLI, WCFY…VFLL, LVGL…LSWG, IIGL…VQWW, IFSF…PIWF, LMSI…AVLV, IGFY…GAGL, IPFG…VQAV, and LAIA…ISVA. Asn-416 carries an N-linked (GlcNAc...) asparagine glycan. A helical membrane pass occupies residues 442 to 462; it reads LAITQALYVGVALSSLAIVGA.

This sequence belongs to the major facilitator superfamily. TCR/Tet family.

It is found in the cell membrane. Its function is as follows. MFS-type transporter; part of the lnb gene cluster that mediates the biosynthesis of diastereomeric piperazines. Lna and lnb clusters encode sets of enzymes that produce overlapping sets of previously undescribed metabolites such as piperazinomycin-like metabolites or morpholine. The lna and lnb biosynthetic pathways appear to be part of a signaling network that controls the formation of sclerotia, a resilient overwintering structure. May be involved in the secretion of the metabolites produced by the lna and lnb clusters. This is MFS-type transporter lnaF from Aspergillus flavus (strain ATCC 200026 / FGSC A1120 / IAM 13836 / NRRL 3357 / JCM 12722 / SRRC 167).